Reading from the N-terminus, the 127-residue chain is MAREFSRADRVAQELQKEIAIILQREVKDPRIGMVTVSDVEISRDLAYAKVFVTFLFDSDESAVERGLEGLNKASGYIRTLVGKAMRLRIVPELRFVYDQSLVEGMRMSNLVTNVIRKDQERYVEEE.

Belongs to the RbfA family. As to quaternary structure, monomer. Binds 30S ribosomal subunits, but not 50S ribosomal subunits or 70S ribosomes.

Its subcellular location is the cytoplasm. One of several proteins that assist in the late maturation steps of the functional core of the 30S ribosomal subunit. Associates with free 30S ribosomal subunits (but not with 30S subunits that are part of 70S ribosomes or polysomes). Required for efficient processing of 16S rRNA. May interact with the 5'-terminal helix region of 16S rRNA. This is Ribosome-binding factor A from Glaesserella parasuis serovar 5 (strain SH0165) (Haemophilus parasuis).